The primary structure comprises 221 residues: 3-isopropylmalate dehydratase small subunit (221 aa).

This sequence belongs to the LeuD family. LeuD type 1 subfamily. In terms of assembly, heterodimer of LeuC and LeuD.

It catalyses the reaction (2R,3S)-3-isopropylmalate = (2S)-2-isopropylmalate. The protein operates within amino-acid biosynthesis; L-leucine biosynthesis; L-leucine from 3-methyl-2-oxobutanoate: step 2/4. Its function is as follows. Catalyzes the isomerization between 2-isopropylmalate and 3-isopropylmalate, via the formation of 2-isopropylmaleate. The sequence is that of 3-isopropylmalate dehydratase small subunit from Nitrosomonas europaea (strain ATCC 19718 / CIP 103999 / KCTC 2705 / NBRC 14298).